A 68-amino-acid chain; its full sequence is Cytotoxic linear peptide IsCT (68 aa).

Residues 1–23 form the signal peptide; the sequence is MKTQFAILLVALVLFQMFAQSDA. Phenylalanine 36 is modified (phenylalanine amide). Positions 40 to 68 are excised as a propeptide; it reads GLSDLDGLDELFDGEISKADRDFLRELMR.

Belongs to the non-disulfide-bridged peptide (NDBP) superfamily. Short antimicrobial peptide (group 4) family. IsCTf is an enzymatic proteolytic cleavage product of IsCT by the proteases present in the venom. As to expression, expressed by the venom gland.

The protein resides in the secreted. Its subcellular location is the target cell membrane. Its function is as follows. Shows weak hemolytic activity and antibacterial activity against both Gram-positive and Gram-negative bacteria probably by forming pores in the cell membrane. IsCT adopts an amphipathic alpha-helical structure. Functionally, shows neither hemolytic, nor antibacterial activities, probably because it cannot adopt amphipathic alpha-helical structure. This is Cytotoxic linear peptide IsCT from Opisthacanthus madagascariensis (Scorpion).